The following is a 227-amino-acid chain: Cytochrome c oxidase subunit 2 (227 aa).

The Mitochondrial intermembrane segment spans residues 1-14 (MAYPLQLGLQDASS). Residues 15 to 45 (PIMEELMNFHDHTLMIVFLISSLVLYLISLM) traverse the membrane as a helical segment. Residues 46–59 (LTTKLIHTSTMDAQ) are Mitochondrial matrix-facing. The chain crosses the membrane as a helical span at residues 60 to 87 (EVETVWTILPAIILILIALPSLRILYMM). At 88–227 (DEINNPVLTV…LFENWSLSLT (140 aa)) the chain is on the mitochondrial intermembrane side. Cu cation-binding residues include histidine 161, cysteine 196, glutamate 198, cysteine 200, histidine 204, and methionine 207. Glutamate 198 lines the Mg(2+) pocket.

Belongs to the cytochrome c oxidase subunit 2 family. In terms of assembly, component of the cytochrome c oxidase (complex IV, CIV), a multisubunit enzyme composed of 14 subunits. The complex is composed of a catalytic core of 3 subunits MT-CO1, MT-CO2 and MT-CO3, encoded in the mitochondrial DNA, and 11 supernumerary subunits COX4I, COX5A, COX5B, COX6A, COX6B, COX6C, COX7A, COX7B, COX7C, COX8 and NDUFA4, which are encoded in the nuclear genome. The complex exists as a monomer or a dimer and forms supercomplexes (SCs) in the inner mitochondrial membrane with NADH-ubiquinone oxidoreductase (complex I, CI) and ubiquinol-cytochrome c oxidoreductase (cytochrome b-c1 complex, complex III, CIII), resulting in different assemblies (supercomplex SCI(1)III(2)IV(1) and megacomplex MCI(2)III(2)IV(2)). Found in a complex with TMEM177, COA6, COX18, COX20, SCO1 and SCO2. Interacts with TMEM177 in a COX20-dependent manner. Interacts with COX20. Interacts with COX16. It depends on Cu cation as a cofactor.

It is found in the mitochondrion inner membrane. The enzyme catalyses 4 Fe(II)-[cytochrome c] + O2 + 8 H(+)(in) = 4 Fe(III)-[cytochrome c] + 2 H2O + 4 H(+)(out). Functionally, component of the cytochrome c oxidase, the last enzyme in the mitochondrial electron transport chain which drives oxidative phosphorylation. The respiratory chain contains 3 multisubunit complexes succinate dehydrogenase (complex II, CII), ubiquinol-cytochrome c oxidoreductase (cytochrome b-c1 complex, complex III, CIII) and cytochrome c oxidase (complex IV, CIV), that cooperate to transfer electrons derived from NADH and succinate to molecular oxygen, creating an electrochemical gradient over the inner membrane that drives transmembrane transport and the ATP synthase. Cytochrome c oxidase is the component of the respiratory chain that catalyzes the reduction of oxygen to water. Electrons originating from reduced cytochrome c in the intermembrane space (IMS) are transferred via the dinuclear copper A center (CU(A)) of subunit 2 and heme A of subunit 1 to the active site in subunit 1, a binuclear center (BNC) formed by heme A3 and copper B (CU(B)). The BNC reduces molecular oxygen to 2 water molecules using 4 electrons from cytochrome c in the IMS and 4 protons from the mitochondrial matrix. This chain is Cytochrome c oxidase subunit 2 (MT-CO2), found in Taterillus emini (Emin's gerbil).